Reading from the N-terminus, the 89-residue chain is Small ribosomal subunit protein uS15 (89 aa).

This sequence belongs to the universal ribosomal protein uS15 family. In terms of assembly, part of the 30S ribosomal subunit. Forms a bridge to the 50S subunit in the 70S ribosome, contacting the 23S rRNA.

Functionally, one of the primary rRNA binding proteins, it binds directly to 16S rRNA where it helps nucleate assembly of the platform of the 30S subunit by binding and bridging several RNA helices of the 16S rRNA. Forms an intersubunit bridge (bridge B4) with the 23S rRNA of the 50S subunit in the ribosome. The chain is Small ribosomal subunit protein uS15 from Solibacter usitatus (strain Ellin6076).